Consider the following 349-residue polypeptide: Protein pelota homolog (349 aa).

Belongs to the eukaryotic release factor 1 family. Pelota subfamily. As to quaternary structure, monomer. It depends on a divalent metal cation as a cofactor.

It is found in the cytoplasm. Functionally, may function in recognizing stalled ribosomes, interact with stem-loop structures in stalled mRNA molecules, and effect endonucleolytic cleavage of the mRNA. May play a role in the release non-functional ribosomes and degradation of damaged mRNAs. Has endoribonuclease activity. This chain is Protein pelota homolog, found in Nitrosopumilus maritimus (strain SCM1).